The chain runs to 157 residues: Cyclic pyranopterin monophosphate synthase (157 aa).

Substrate-binding positions include 74–76 (MCH) and 112–113 (ME). Asp-127 is an active-site residue.

This sequence belongs to the MoaC family. As to quaternary structure, homohexamer; trimer of dimers.

It carries out the reaction (8S)-3',8-cyclo-7,8-dihydroguanosine 5'-triphosphate = cyclic pyranopterin phosphate + diphosphate. It participates in cofactor biosynthesis; molybdopterin biosynthesis. Its function is as follows. Catalyzes the conversion of (8S)-3',8-cyclo-7,8-dihydroguanosine 5'-triphosphate to cyclic pyranopterin monophosphate (cPMP). This is Cyclic pyranopterin monophosphate synthase from Syntrophomonas wolfei subsp. wolfei (strain DSM 2245B / Goettingen).